The primary structure comprises 476 residues: Monofunctional riboflavin biosynthesis protein RIBA 2, chloroplastic (476 aa).

Residues 1 to 54 constitute a chloroplast transit peptide; sequence MASLTLRCDSTHLLPSRDVVKGTKPFGTSLVYPRIISKKFNVRMRVIPEEGDVF. The DHBP synthase stretch occupies residues 44-306; sequence MRVIPEEGDV…IADLIRYRRK (263 aa). D-ribulose 5-phosphate is bound by residues 130–131, Asp135, 245–249, and Glu269; these read RE and RAGHT. Residue Glu131 coordinates Mg(2+). A Mg(2+)-binding site is contributed by His248. The interval 307–476 is inactive GTP cyclohydrolase II; the sequence is RERLVEFTAV…SGKVPLITTP (170 aa). GTP-binding positions include 357–361, Gln376, 399–401, and Thr450; these read RVHAE and ESK.

In the N-terminal section; belongs to the DHBP synthase family. This sequence in the C-terminal section; belongs to the GTP cyclohydrolase II family. Requires Mg(2+) as cofactor. Mn(2+) serves as cofactor. Expressed in leaves, shoots, roots, flowers and siliques.

The protein resides in the plastid. Its subcellular location is the chloroplast. It carries out the reaction D-ribulose 5-phosphate = (2S)-2-hydroxy-3-oxobutyl phosphate + formate + H(+). It functions in the pathway cofactor biosynthesis; riboflavin biosynthesis; 2-hydroxy-3-oxobutyl phosphate from D-ribulose 5-phosphate: step 1/1. Functionally, involved in riboflavin biosynthesis. Catalyzes the conversion of D-ribulose 5-phosphate to formate and 3,4-dihydroxy-2-butanone 4-phosphate. RIBA2 and RIBA3 together are not able to complement the loss of function of RIBA1. This chain is Monofunctional riboflavin biosynthesis protein RIBA 2, chloroplastic (RIBA2), found in Arabidopsis thaliana (Mouse-ear cress).